Consider the following 240-residue polypeptide: Probable septum site-determining protein MinC (240 aa).

Belongs to the MinC family. As to quaternary structure, interacts with MinD and FtsZ.

Its function is as follows. Cell division inhibitor that blocks the formation of polar Z ring septums. Rapidly oscillates between the poles of the cell to destabilize FtsZ filaments that have formed before they mature into polar Z rings. Prevents FtsZ polymerization. The protein is Probable septum site-determining protein MinC of Acinetobacter baylyi (strain ATCC 33305 / BD413 / ADP1).